Here is a 576-residue protein sequence, read N- to C-terminus: V-type ATP synthase alpha chain (576 aa).

238–245 (GPFGAGKT) is a binding site for ATP.

The protein belongs to the ATPase alpha/beta chains family.

It carries out the reaction ATP + H2O + 4 H(+)(in) = ADP + phosphate + 5 H(+)(out). Its function is as follows. Produces ATP from ADP in the presence of a proton gradient across the membrane. The V-type alpha chain is a catalytic subunit. The chain is V-type ATP synthase alpha chain from Borrelia duttonii (strain Ly).